A 304-amino-acid polypeptide reads, in one-letter code: MNKTLKIATRQSPLALWQAQHVKSRLEKIYPNLTVILVKITTKGDQILNSSLSKIGGKGLFIKELEISIMKGMSDIAVHSMKDVPYEIPQEFELGAILKCENPFDAFVSNHFSSIDDLPKNAKVGTCSMRRILQLKVIRPDLQIIDLRGNVNTRLKKLDDGEFDAIILACAGLIRLGFGNRIKQQIPENQNLPAVGQGAIGIEIRENDKEILDLIKPLIDIETSYRIIAERAMNTQLEGGCSVPVAGFATINNKQITLTGLVGNIDTGVILKEKIFGHVSQAEILGIELANKLILLGAKDILKD.

S-(dipyrrolylmethanemethyl)cysteine is present on Cys241.

This sequence belongs to the HMBS family. Monomer. Requires dipyrromethane as cofactor.

It catalyses the reaction 4 porphobilinogen + H2O = hydroxymethylbilane + 4 NH4(+). Its pathway is porphyrin-containing compound metabolism; protoporphyrin-IX biosynthesis; coproporphyrinogen-III from 5-aminolevulinate: step 2/4. Tetrapolymerization of the monopyrrole PBG into the hydroxymethylbilane pre-uroporphyrinogen in several discrete steps. The sequence is that of Porphobilinogen deaminase from Vesicomyosocius okutanii subsp. Calyptogena okutanii (strain HA).